The primary structure comprises 282 residues: 2-dehydro-3-deoxyphosphooctonate aldolase (282 aa).

Belongs to the KdsA family.

The protein resides in the cytoplasm. It carries out the reaction D-arabinose 5-phosphate + phosphoenolpyruvate + H2O = 3-deoxy-alpha-D-manno-2-octulosonate-8-phosphate + phosphate. It participates in carbohydrate biosynthesis; 3-deoxy-D-manno-octulosonate biosynthesis; 3-deoxy-D-manno-octulosonate from D-ribulose 5-phosphate: step 2/3. Its pathway is bacterial outer membrane biogenesis; lipopolysaccharide biosynthesis. The sequence is that of 2-dehydro-3-deoxyphosphooctonate aldolase from Shewanella amazonensis (strain ATCC BAA-1098 / SB2B).